The primary structure comprises 102 residues: Acylphosphatase 1 (102 aa).

Residues 12–100 (TRLVRVRGRV…PRFDRFEQLP (89 aa)) enclose the Acylphosphatase-like domain. Residues arginine 27 and asparagine 45 contribute to the active site.

This sequence belongs to the acylphosphatase family.

It carries out the reaction an acyl phosphate + H2O = a carboxylate + phosphate + H(+). In Ralstonia nicotianae (strain ATCC BAA-1114 / GMI1000) (Ralstonia solanacearum), this protein is Acylphosphatase 1 (acyP1).